A 205-amino-acid chain; its full sequence is Small ribosomal subunit protein uS4 (205 aa).

One can recognise an S4 RNA-binding domain in the interval 93–171; that stretch reads SRVSSVLYRS…SPHYLEVDRE (79 aa).

The protein belongs to the universal ribosomal protein uS4 family. In terms of assembly, part of the 30S ribosomal subunit. Contacts protein S5. The interaction surface between S4 and S5 is involved in control of translational fidelity.

One of the primary rRNA binding proteins, it binds directly to 16S rRNA where it nucleates assembly of the body of the 30S subunit. In terms of biological role, with S5 and S12 plays an important role in translational accuracy. This chain is Small ribosomal subunit protein uS4, found in Neorickettsia sennetsu (strain ATCC VR-367 / Miyayama) (Ehrlichia sennetsu).